Consider the following 326-residue polypeptide: Tagatose 1,6-diphosphate aldolase 2 (326 aa).

This sequence belongs to the aldolase LacD family.

The catalysed reaction is D-tagatofuranose 1,6-bisphosphate = D-glyceraldehyde 3-phosphate + dihydroxyacetone phosphate. The protein operates within carbohydrate metabolism; D-tagatose 6-phosphate degradation; D-glyceraldehyde 3-phosphate and glycerone phosphate from D-tagatose 6-phosphate: step 2/2. The sequence is that of Tagatose 1,6-diphosphate aldolase 2 (lacD2) from Streptococcus agalactiae serotype III (strain NEM316).